The primary structure comprises 140 residues: 3-hydroxyacyl-[acyl-carrier-protein] dehydratase FabZ (140 aa).

H48 is a catalytic residue.

Belongs to the thioester dehydratase family. FabZ subfamily.

The protein localises to the cytoplasm. It catalyses the reaction a (3R)-hydroxyacyl-[ACP] = a (2E)-enoyl-[ACP] + H2O. In terms of biological role, involved in unsaturated fatty acids biosynthesis. Catalyzes the dehydration of short chain beta-hydroxyacyl-ACPs and long chain saturated and unsaturated beta-hydroxyacyl-ACPs. The sequence is that of 3-hydroxyacyl-[acyl-carrier-protein] dehydratase FabZ from Exiguobacterium sibiricum (strain DSM 17290 / CCUG 55495 / CIP 109462 / JCM 13490 / 255-15).